Here is a 570-residue protein sequence, read N- to C-terminus: Nucleoprotein (570 aa).

A binding site for the cap structure m7GTP region spans residues 54 to 236 (LRKTKRTDDD…ITKEESSINI (183 aa)). Residues 332-356 (DLTKKPDAVPEPGAAPRPAERKGQN) are disordered. 2 residues coordinate Mg(2+): D386 and E388. D386 and E388 together coordinate Mn(2+). Zn(2+) contacts are provided by E396, C503, H506, and C531. D535 serves as a coordination point for Mg(2+). A Mn(2+)-binding site is contributed by D535.

The protein belongs to the arenaviridae nucleocapsid protein family. Homomultimerizes to form the nucleocapsid. Binds to viral genomic RNA. Interacts with glycoprotein G2. Interacts with protein Z; this interaction probably directs the encapsidated genome to budding sites. Interacts with protein L; this interaction does not interfere with Z-L interaction. Interacts with host IKBKE (via Protein kinase domain); the interaction inhibits IKBKE kinase activity.

The protein localises to the virion. Its subcellular location is the host cytoplasm. Its function is as follows. Encapsidates the genome, protecting it from nucleases. The encapsidated genomic RNA is termed the nucleocapsid (NC). Serves as template for viral transcription and replication. The increased presence of protein N in host cell does not seem to trigger the switch from transcription to replication as observed in other negative strain RNA viruses. Through the interaction with host IKBKE, strongly inhibits the phosphorylation and nuclear translocation of host IRF3, a protein involved in interferon activation pathway, leading to the inhibition of interferon-beta and IRF3-dependent promoters activation. Also encodes a functional 3'-5' exoribonuclease that degrades preferentially dsRNA substrates and thereby participates in the suppression of interferon induction. In Artibeus (neotropical fruit bats), this protein is Nucleoprotein.